We begin with the raw amino-acid sequence, 202 residues long: Probable septum site-determining protein MinC (202 aa).

It belongs to the MinC family. As to quaternary structure, interacts with MinD and FtsZ.

Its function is as follows. Cell division inhibitor that blocks the formation of polar Z ring septums. Rapidly oscillates between the poles of the cell to destabilize FtsZ filaments that have formed before they mature into polar Z rings. Prevents FtsZ polymerization. This Dictyoglomus turgidum (strain DSM 6724 / Z-1310) protein is Probable septum site-determining protein MinC.